The following is a 230-amino-acid chain: Tail fiber protein p36 (230 aa).

As to quaternary structure, the distal half-fiber contains two molecules each of Gp36 and Gp37 and one molecule of Gp35.

It localises to the virion. Its function is as follows. Structural component of the distal-half tail fiber. The protein is Tail fiber protein p36 (36) of Enterobacteria phage K3 (Bacteriophage K3).